A 92-amino-acid polypeptide reads, in one-letter code: MKLLLAIALMLTTVMWASTQQPQAVHTYCGRHLARTLADLCWEAGVDKRSDAQFASYGSAWLMPYSEGRDQRGIVDECCLRPCSVDVLLSYC.

An N-terminal signal peptide occupies residues 1 to 19 (MKLLLAIALMLTTVMWAST). A Pyrrolidone carboxylic acid modification is found at Gln-20. 3 cysteine pairs are disulfide-bonded: Cys-29/Cys-79, Cys-41/Cys-92, and Cys-78/Cys-83. Residues 50-71 (SDAQFASYGSAWLMPYSEGRDQ) constitute a propeptide, c peptide like.

This sequence belongs to the insulin family. In terms of assembly, heterodimer of a B chain and an A chain linked by two disulfide bonds.

It localises to the secreted. Its function is as follows. Brain peptide responsible for activation of prothoracic glands to produce ecdysone in insects. The protein is Bombyxin A-9 (BBXA9) of Bombyx mori (Silk moth).